Here is a 364-residue protein sequence, read N- to C-terminus: Chorismate synthase (364 aa).

Arg48 and Arg54 together coordinate NADP(+). Residues 125-127 (RSS), 238-239 (NA), Gly278, 293-297 (KPTSS), and Arg319 each bind FMN.

It belongs to the chorismate synthase family. As to quaternary structure, homotetramer. The cofactor is FMNH2.

It catalyses the reaction 5-O-(1-carboxyvinyl)-3-phosphoshikimate = chorismate + phosphate. It functions in the pathway metabolic intermediate biosynthesis; chorismate biosynthesis; chorismate from D-erythrose 4-phosphate and phosphoenolpyruvate: step 7/7. Its function is as follows. Catalyzes the anti-1,4-elimination of the C-3 phosphate and the C-6 proR hydrogen from 5-enolpyruvylshikimate-3-phosphate (EPSP) to yield chorismate, which is the branch point compound that serves as the starting substrate for the three terminal pathways of aromatic amino acid biosynthesis. This reaction introduces a second double bond into the aromatic ring system. This chain is Chorismate synthase, found in Shewanella frigidimarina (strain NCIMB 400).